A 261-amino-acid chain; its full sequence is Hydroxylase cctR (261 aa).

The helical transmembrane segment at 38 to 58 threads the bilayer; the sequence is VFVSLLILSNTISFGLLGWIG. N-linked (GlcNAc...) asparagine glycosylation is present at Asn-95. 2 consecutive short sequence motifs (HXXHC) follow at residues 146–150 and 176–180; these read HEIHC and HIAHC.

This sequence belongs to the ustYa family.

Its subcellular location is the membrane. It functions in the pathway mycotoxin biosynthesis. Hydroxylase; part of the gene cluster that mediates the biosynthesis of the mycotoxin cyclochlorotine, a hepatotoxic and carcinogenic cyclic chlorinated pentapeptide. Within the pathway, cctR performs the last step by hydroxylating cyclochlorotine to yield hydroxycyclochlorotine. The NRPS cctN initially catalyzes the condensation of L-serine (Ser), Pro, L-2-aminobutyrate (2Abu), Ser, and beta-Phe in this order to produce isocyclotine. After the dichlorination of Pro2 catalyzed by cctP2 to produce isocyclochlorotine, the cctO-mediated transacylation of isocyclochlorotine can furnish cyclochlorotine. The subsequent hydroxylation of cyclochlorotine by cctR yields hydroxycyclochlorotine as the final product. CctP1 probably acts as a phenylalanine aminomutase and provides the uncommon building block beta-Phe. Furthermore, 2Abu can be synthesized from threonine by one of the threonine dehydratases and transaminases localized outside of the cluster. The functions of the remaining proteins encoded by the cluster, cctM and cctT, have not been identified yet. The chain is Hydroxylase cctR from Talaromyces islandicus (Penicillium islandicum).